Here is a 152-residue protein sequence, read N- to C-terminus: Interleukin-3 (152 aa).

An N-terminal signal peptide occupies residues 1–19; the sequence is MSRLPVLLLLQLLVRPGLQ. Residues N34 and N89 are each glycosylated (N-linked (GlcNAc...) asparagine). Residues C35 and C103 are joined by a disulfide bond.

This sequence belongs to the IL-3 family. In terms of assembly, monomer. As to expression, activated T-cells, mast cells, natural killer cells.

It is found in the secreted. Granulocyte/macrophage colony-stimulating factors are cytokines that act in hematopoiesis by controlling the production, differentiation, and function of 2 related white cell populations of the blood, the granulocytes and the monocytes-macrophages. In terms of biological role, this CSF induces granulocytes, macrophages, mast cells, stem cells, erythroid cells, eosinophils and megakaryocytes. This chain is Interleukin-3 (IL3), found in Pan troglodytes (Chimpanzee).